We begin with the raw amino-acid sequence, 213 residues long: Octanoyltransferase (213 aa).

In terms of domain architecture, BPL/LPL catalytic spans 32–207 (NSTLDEIWLV…NILALLNNPD (176 aa)). Substrate-binding positions include 71–78 (RGGQVTYH), 138–140 (SLG), and 151–153 (GLA). Catalysis depends on cysteine 169, which acts as the Acyl-thioester intermediate.

This sequence belongs to the LipB family.

Its subcellular location is the cytoplasm. It catalyses the reaction octanoyl-[ACP] + L-lysyl-[protein] = N(6)-octanoyl-L-lysyl-[protein] + holo-[ACP] + H(+). It participates in protein modification; protein lipoylation via endogenous pathway; protein N(6)-(lipoyl)lysine from octanoyl-[acyl-carrier-protein]: step 1/2. Its function is as follows. Catalyzes the transfer of endogenously produced octanoic acid from octanoyl-acyl-carrier-protein onto the lipoyl domains of lipoate-dependent enzymes. Lipoyl-ACP can also act as a substrate although octanoyl-ACP is likely to be the physiological substrate. This chain is Octanoyltransferase, found in Shigella flexneri serotype 5b (strain 8401).